A 78-amino-acid polypeptide reads, in one-letter code: Probable Vpr-like protein (78 aa).

Positions 35-43 (AIRLLQGLF) match the Nuclear export signal motif. The short motif at 45–54 (RYRFKKPRVD) is the Nuclear localization signal element.

It localises to the virion. The protein resides in the host nucleus. In terms of biological role, seems to function as a Vpr-like protein, since it mediates host cell cycle arrest in G2 phase. Cell cycle arrest creates a favorable environment for maximizing viral expression and production. The protein is Probable Vpr-like protein of Feline immunodeficiency virus (isolate Petaluma) (FIV).